Reading from the N-terminus, the 527-residue chain is ATP synthase subunit alpha (527 aa).

177 to 184 (GDRQTGKT) serves as a coordination point for ATP.

The protein belongs to the ATPase alpha/beta chains family. As to quaternary structure, F-type ATPases have 2 components, CF(1) - the catalytic core - and CF(0) - the membrane proton channel. CF(1) has five subunits: alpha(3), beta(3), gamma(1), delta(1), epsilon(1). CF(0) has four main subunits: a(1), b(1), b'(1) and c(9-12).

The protein localises to the cell membrane. The enzyme catalyses ATP + H2O + 4 H(+)(in) = ADP + phosphate + 5 H(+)(out). Its function is as follows. Produces ATP from ADP in the presence of a proton gradient across the membrane. The alpha chain is a regulatory subunit. In Roseiflexus sp. (strain RS-1), this protein is ATP synthase subunit alpha.